The following is a 414-amino-acid chain: DNA primase small subunit PriS (414 aa).

Residues Asp98, Asp100, and Asp312 contribute to the active site.

It belongs to the eukaryotic-type primase small subunit family. Heterodimer of a small subunit (PriS) and a large subunit (PriL). Requires Mg(2+) as cofactor. Mn(2+) serves as cofactor.

In terms of biological role, catalytic subunit of DNA primase, an RNA polymerase that catalyzes the synthesis of short RNA molecules used as primers for DNA polymerase during DNA replication. The small subunit contains the primase catalytic core and has DNA synthesis activity on its own. Binding to the large subunit stabilizes and modulates the activity, increasing the rate of DNA synthesis while decreasing the length of the DNA fragments, and conferring RNA synthesis capability. The DNA polymerase activity may enable DNA primase to also catalyze primer extension after primer synthesis. May also play a role in DNA repair. The sequence is that of DNA primase small subunit PriS from Methanosarcina mazei (strain ATCC BAA-159 / DSM 3647 / Goe1 / Go1 / JCM 11833 / OCM 88) (Methanosarcina frisia).